Here is a 101-residue protein sequence, read N- to C-terminus: Urease subunit beta (101 aa).

The protein belongs to the urease beta subunit family. As to quaternary structure, heterotrimer of UreA (gamma), UreB (beta) and UreC (alpha) subunits. Three heterotrimers associate to form the active enzyme.

The protein resides in the cytoplasm. It carries out the reaction urea + 2 H2O + H(+) = hydrogencarbonate + 2 NH4(+). It participates in nitrogen metabolism; urea degradation; CO(2) and NH(3) from urea (urease route): step 1/1. The polypeptide is Urease subunit beta (Acaryochloris marina (strain MBIC 11017)).